We begin with the raw amino-acid sequence, 271 residues long: Mannosyl-3-phosphoglycerate phosphatase (271 aa).

Asp13 acts as the Nucleophile in catalysis. The Mg(2+) site is built by Asp13, Asp15, and Asp214.

The protein belongs to the HAD-like hydrolase superfamily. MPGP family. Mg(2+) serves as cofactor.

It localises to the cytoplasm. It catalyses the reaction 2-O-(alpha-D-mannosyl)-3-phosphoglycerate + H2O = (2R)-2-O-(alpha-D-mannosyl)-glycerate + phosphate. The sequence is that of Mannosyl-3-phosphoglycerate phosphatase (yedP) from Salmonella choleraesuis (strain SC-B67).